We begin with the raw amino-acid sequence, 800 residues long: DNA topoisomerase 4 subunit A (800 aa).

In terms of domain architecture, Topo IIA-type catalytic spans 31-495 (LPDVRDGLKP…EIEEIKIDKE (465 aa)). Tyr119 acts as the O-(5'-phospho-DNA)-tyrosine intermediate in catalysis.

It belongs to the type II topoisomerase GyrA/ParC subunit family. ParC type 2 subfamily. In terms of assembly, heterotetramer composed of ParC and ParE.

It localises to the cell membrane. It catalyses the reaction ATP-dependent breakage, passage and rejoining of double-stranded DNA.. Functionally, topoisomerase IV is essential for chromosome segregation. It relaxes supercoiled DNA. Performs the decatenation events required during the replication of a circular DNA molecule. The sequence is that of DNA topoisomerase 4 subunit A from Staphylococcus aureus (strain MRSA252).